Here is a 230-residue protein sequence, read N- to C-terminus: Cyclin-dependent kinase inhibitor rum1 (230 aa).

Disordered stretches follow at residues 1 to 25 (MEPSTPPMRGLCTPSTPESPGSFKG), 43 to 118 (PESD…DGLY), and 188 to 230 (SRVP…NLLR). Thr13 carries the phosphothreonine; by MAPK modification. Residue Ser19 is modified to Phosphoserine; by MAPK. 2 positions are modified to phosphothreonine; by cdc2: Thr58 and Thr62. Positions 67 to 147 (LLPNLMLQDR…TFKPKLLFAD (81 aa)) are CDK inhibitory and cyclin-binding. Positions 78 to 91 (NSLERCMEEDREHN) are enriched in basic and acidic residues. Residues 93–102 (FLSSSDNQLL) show a composition bias toward polar residues. A required for activity as a cdc2 kinase inhibitor region spans residues 101 to 230 (LLSRKKRKPT…KDENRHNLLR (130 aa)). The span at 188-199 (SRVPSSSSGSFV) shows a compositional bias: low complexity. Residues 219–230 (NTKDENRHNLLR) are compositionally biased toward basic and acidic residues.

As to quaternary structure, interacts with cdc13, cig2 and pop1. Phosphorylated by cig1-associated cdc2 which leads to increased stability. Phosphorylation by MAPK reduces cdc2 kinase inhibitor ability.

The protein resides in the nucleus. In terms of biological role, regulator of cell cycle G1 phase progression. Ensures the correct sequence of S phase and mitosis in the cell by acting as an inhibitor of the cdc2 mitotic kinase. Probably interacts with cdc2 to inhibit its action until the cell mass for Start is reached. Determines the length of the pre-Start G1 period and prevents mitosis from happening in early G1 cells. Required for maintaining pheromone-induced G1 arrest. Acts as an adapter protein since interaction with cdc13 promotes cyclin proteolysis during G1. Becomes a target for degradation at the G1/S phase transition, following phosphorylation by cig1-associated cdc2 at the G1/S phase transition. This is Cyclin-dependent kinase inhibitor rum1 (rum1) from Schizosaccharomyces pombe (strain 972 / ATCC 24843) (Fission yeast).